We begin with the raw amino-acid sequence, 65 residues long: Hirudin-3A' (65 aa).

Residues Val1–Tyr3 form an interaction with thrombin active site region. Disulfide bonds link Cys6–Cys14, Cys16–Cys28, and Cys22–Cys39. Residues Ser32 to Gln65 are disordered. The O-linked (GalNAc...) threonine glycan is linked to Thr45. Residues Asp55 to Gln65 form an interaction with fibrinogen-binding exosite of thrombin region. Residues Asp55–Gln65 are compositionally biased toward acidic residues. Sulfotyrosine is present on Tyr63.

This sequence belongs to the protease inhibitor I14 (hirudin) family.

The protein localises to the secreted. In terms of biological role, hirudin is a potent thrombin-specific protease inhibitor. It forms a stable non-covalent complex with alpha-thrombin, thereby abolishing its ability to cleave fibrinogen. This chain is Hirudin-3A', found in Hirudo medicinalis (Medicinal leech).